The following is a 225-amino-acid chain: Tryptophan synthase beta chain (225 aa).

It belongs to the TrpB family. As to quaternary structure, tetramer of two alpha and two beta chains. It depends on pyridoxal 5'-phosphate as a cofactor.

It carries out the reaction (1S,2R)-1-C-(indol-3-yl)glycerol 3-phosphate + L-serine = D-glyceraldehyde 3-phosphate + L-tryptophan + H2O. It participates in amino-acid biosynthesis; L-tryptophan biosynthesis; L-tryptophan from chorismate: step 5/5. Its function is as follows. The beta subunit is responsible for the synthesis of L-tryptophan from indole and L-serine. The chain is Tryptophan synthase beta chain (trpB) from Buchnera aphidicola subsp. Rhopalosiphum maidis.